A 373-amino-acid chain; its full sequence is Dual-specificity RNA methyltransferase RlmN (373 aa).

Catalysis depends on Glu94, which acts as the Proton acceptor. Positions Glu100 to Asp339 constitute a Radical SAM core domain. Cysteines 107 and 344 form a disulfide. The [4Fe-4S] cluster site is built by Cys114, Cys118, and Cys121. Residues Gly168 to Glu169, Ser200, Ser222 to His224, and Asn301 contribute to the S-adenosyl-L-methionine site. Cys344 acts as the S-methylcysteine intermediate in catalysis.

This sequence belongs to the radical SAM superfamily. RlmN family. [4Fe-4S] cluster serves as cofactor.

It localises to the cytoplasm. The catalysed reaction is adenosine(2503) in 23S rRNA + 2 reduced [2Fe-2S]-[ferredoxin] + 2 S-adenosyl-L-methionine = 2-methyladenosine(2503) in 23S rRNA + 5'-deoxyadenosine + L-methionine + 2 oxidized [2Fe-2S]-[ferredoxin] + S-adenosyl-L-homocysteine. It catalyses the reaction adenosine(37) in tRNA + 2 reduced [2Fe-2S]-[ferredoxin] + 2 S-adenosyl-L-methionine = 2-methyladenosine(37) in tRNA + 5'-deoxyadenosine + L-methionine + 2 oxidized [2Fe-2S]-[ferredoxin] + S-adenosyl-L-homocysteine. In terms of biological role, specifically methylates position 2 of adenine 2503 in 23S rRNA and position 2 of adenine 37 in tRNAs. m2A2503 modification seems to play a crucial role in the proofreading step occurring at the peptidyl transferase center and thus would serve to optimize ribosomal fidelity. The chain is Dual-specificity RNA methyltransferase RlmN from Shewanella amazonensis (strain ATCC BAA-1098 / SB2B).